The primary structure comprises 236 residues: 2-C-methyl-D-erythritol 4-phosphate cytidylyltransferase (236 aa).

This sequence belongs to the IspD/TarI cytidylyltransferase family. IspD subfamily.

The catalysed reaction is 2-C-methyl-D-erythritol 4-phosphate + CTP + H(+) = 4-CDP-2-C-methyl-D-erythritol + diphosphate. The protein operates within isoprenoid biosynthesis; isopentenyl diphosphate biosynthesis via DXP pathway; isopentenyl diphosphate from 1-deoxy-D-xylulose 5-phosphate: step 2/6. Its function is as follows. Catalyzes the formation of 4-diphosphocytidyl-2-C-methyl-D-erythritol from CTP and 2-C-methyl-D-erythritol 4-phosphate (MEP). This Alkaliphilus oremlandii (strain OhILAs) (Clostridium oremlandii (strain OhILAs)) protein is 2-C-methyl-D-erythritol 4-phosphate cytidylyltransferase.